Here is a 344-residue protein sequence, read N- to C-terminus: Protein-arginine kinase (344 aa).

Residues 14 to 244 (IVLSSRIRLA…KQIIQQERLA (231 aa)) enclose the Phosphagen kinase C-terminal domain. Residues 17-21 (SSRIR), His-81, Arg-115, 166-170 (RASAM), and 197-202 (RGLYGE) contribute to the ATP site.

Belongs to the ATP:guanido phosphotransferase family.

It catalyses the reaction L-arginyl-[protein] + ATP = N(omega)-phospho-L-arginyl-[protein] + ADP + H(+). Catalyzes the specific phosphorylation of arginine residues in proteins. The sequence is that of Protein-arginine kinase from Clostridium novyi (strain NT).